We begin with the raw amino-acid sequence, 334 residues long: Ornithine carbamoyltransferase (334 aa).

Carbamoyl phosphate-binding positions include Ser-57 to Thr-60, Arg-108, and His-135 to Gln-138. Residues Asn-168, Asp-232, and Ser-236–Met-237 contribute to the L-ornithine site. Residues Cys-274 to Leu-275 and Arg-321 contribute to the carbamoyl phosphate site.

Belongs to the aspartate/ornithine carbamoyltransferase superfamily. OTCase family.

The protein resides in the cytoplasm. It carries out the reaction carbamoyl phosphate + L-ornithine = L-citrulline + phosphate + H(+). It participates in amino-acid biosynthesis; L-arginine biosynthesis; L-arginine from L-ornithine and carbamoyl phosphate: step 1/3. Its function is as follows. Reversibly catalyzes the transfer of the carbamoyl group from carbamoyl phosphate (CP) to the N(epsilon) atom of ornithine (ORN) to produce L-citrulline. This is Ornithine carbamoyltransferase from Cutibacterium acnes (strain DSM 16379 / KPA171202) (Propionibacterium acnes).